The sequence spans 1401 residues: Protein dispatched homolog 2 (1401 aa).

2 disordered regions span residues 1-91 and 113-138; these read MDGD…LAPA and DRAA…GTWK. Residues 170–190 traverse the membrane as a helical segment; sequence VAVLMLCLAVIFLCTLAGLLG. A glycan (N-linked (GlcNAc...) asparagine) is linked at Asn-239. A disordered region spans residues 241–264; sequence SSSHNTLRPAPRGSAQESAVRPRR. Asn-349 and Asn-465 each carry an N-linked (GlcNAc...) asparagine glycan. Residues 471–643 form the SSD domain; sequence GMDLGLKQEL…LVWLPASAVL (173 aa). Transmembrane regions (helical) follow at residues 484-504, 510-530, 542-562, 589-609, 617-637, 704-724, 964-984, 990-1010, 1019-1039, 1064-1084, and 1088-1108; these read FLVQ…FGMA, LFLT…AFFL, FVNL…TLIF, FGYL…ASYL, CLAL…LVWL, YIWI…AGVS, PAVV…LGTW, LFSV…LVLL, ALFL…YCIS, AVGA…TVLL, and LGII…FFFQ. Disordered stretches follow at residues 1169-1192, 1229-1337, and 1352-1401; these read ARRR…PSVL, PALQ…NGKR, and SLPA…GYSS. The span at 1175–1184 shows a compositional bias: polar residues; the sequence is SFDTSTATSK. Positions 1259-1270 are enriched in low complexity; the sequence is PLPASPEAPAHS. Residues 1284–1305 are compositionally biased toward polar residues; the sequence is SSASTLEGLSVSDETCLSTSEP. The segment covering 1352-1362 has biased composition (low complexity); that stretch reads SLPASHHSSLS. Arg-1366 is modified (omega-N-methylarginine).

It belongs to the dispatched family.

It localises to the membrane. The polypeptide is Protein dispatched homolog 2 (Homo sapiens (Human)).